Consider the following 96-residue polypeptide: Putative pterin-4-alpha-carbinolamine dehydratase (96 aa).

It belongs to the pterin-4-alpha-carbinolamine dehydratase family.

It catalyses the reaction (4aS,6R)-4a-hydroxy-L-erythro-5,6,7,8-tetrahydrobiopterin = (6R)-L-erythro-6,7-dihydrobiopterin + H2O. The chain is Putative pterin-4-alpha-carbinolamine dehydratase from Paraburkholderia xenovorans (strain LB400).